Reading from the N-terminus, the 860-residue chain is Leucine--tRNA ligase (860 aa).

The short motif at 42 to 52 (PYPSGRLHMGH) is the 'HIGH' region element. Positions 619-623 (KMSKS) match the 'KMSKS' region motif. Lys622 lines the ATP pocket.

It belongs to the class-I aminoacyl-tRNA synthetase family.

Its subcellular location is the cytoplasm. The enzyme catalyses tRNA(Leu) + L-leucine + ATP = L-leucyl-tRNA(Leu) + AMP + diphosphate. The polypeptide is Leucine--tRNA ligase (Escherichia coli (strain SMS-3-5 / SECEC)).